The sequence spans 810 residues: AMP deaminase (810 aa).

A compositionally biased stretch (polar residues) spans 1–10; sequence MDNQATQRLN. Disordered regions lie at residues 1 to 61 and 114 to 137; these read MDNQ…SHES and AAMN…PRTL. Phosphoserine occurs at positions 19, 58, and 61. The segment covering 125–137 has biased composition (polar residues); sequence HASQNSGGKPRTL. Ser138 is subject to Phosphoserine. Residues His362 and His364 each coordinate Zn(2+). Substrate-binding positions include His364 and 433-438; that span reads KFNLKY. His630 contacts Zn(2+). Position 633 (Glu633) interacts with substrate. The Proton acceptor role is filled by His652. Residue Asp707 coordinates Zn(2+). 708-711 contributes to the substrate binding site; it reads DPLQ.

Belongs to the metallo-dependent hydrolases superfamily. Adenosine and AMP deaminases family. Homotetramer. Requires Zn(2+) as cofactor.

The catalysed reaction is AMP + H2O + H(+) = IMP + NH4(+). It functions in the pathway purine metabolism; IMP biosynthesis via salvage pathway; IMP from AMP: step 1/1. Its function is as follows. AMP deaminase plays a critical role in energy metabolism. The protein is AMP deaminase (AMD1) of Saccharomyces cerevisiae (strain ATCC 204508 / S288c) (Baker's yeast).